Consider the following 278-residue polypeptide: 3-methyl-2-oxobutanoate hydroxymethyltransferase (278 aa).

2 residues coordinate Mg(2+): D43 and D82. Residues 43–44 (DS), D82, and K112 each bind 3-methyl-2-oxobutanoate. E114 lines the Mg(2+) pocket. E181 acts as the Proton acceptor in catalysis.

Belongs to the PanB family. As to quaternary structure, homodecamer; pentamer of dimers. Requires Mg(2+) as cofactor.

Its subcellular location is the cytoplasm. It catalyses the reaction 3-methyl-2-oxobutanoate + (6R)-5,10-methylene-5,6,7,8-tetrahydrofolate + H2O = 2-dehydropantoate + (6S)-5,6,7,8-tetrahydrofolate. Its pathway is cofactor biosynthesis; (R)-pantothenate biosynthesis; (R)-pantoate from 3-methyl-2-oxobutanoate: step 1/2. Catalyzes the reversible reaction in which hydroxymethyl group from 5,10-methylenetetrahydrofolate is transferred onto alpha-ketoisovalerate to form ketopantoate. The polypeptide is 3-methyl-2-oxobutanoate hydroxymethyltransferase (Bacillus cereus (strain ATCC 10987 / NRS 248)).